Reading from the N-terminus, the 438-residue chain is MPNFIDRRLNPKDKSLGNRQRFLKRAREELKRAIKEQVKSGKITDVDAEHNVSMPARGVSEPTFQPAGDSGERQYVLPGNREFAAGDRLPKRSSGGGATGAGAGTGQSQDEFQFVLSREEVLDLFFEDLELPDMVKLNLKESVAFKRRRAGFAATGSPMNINVGRTMRNSFGRRIALHRPGRKEMEAIAEEIARLEVEPNAGAKHLQHLEELRQKLEKLERRRRRIPYVDPVDIRFNRFEQQPLPNASAVMFCLMDVSASMGEREKDLAKRFFVLLHLFLKRRYDRIDIVFIRHTDEAGEVDENTFFYSKQSGGTIVSTALEEMLRVIRERYPAREWNIYAAQASDGENISGDSERCASLLHDDLMRLCQYYAYVEIIDERETEIFGTTDNGTSLWRAYRTVDGEWPNFQMTRIAKPADIYPVFRKLFGKQPAVQVRK.

Over residues 1-16 (MPNFIDRRLNPKDKSL) the composition is skewed to basic and acidic residues. Disordered regions lie at residues 1-20 (MPNF…GNRQ) and 83-107 (FAAG…GTGQ). Over residues 94–105 (SGGGATGAGAGT) the composition is skewed to gly residues.

Belongs to the UPF0229 family.

The polypeptide is UPF0229 protein NGR_c12350 (Sinorhizobium fredii (strain NBRC 101917 / NGR234)).